The sequence spans 336 residues: tRNA N6-adenosine threonylcarbamoyltransferase (336 aa).

Fe cation contacts are provided by His114 and His118. Substrate is bound by residues 136–140 (LVSGG), Asp169, Gly182, Asp186, and Asn275. Asp301 contacts Fe cation.

The protein belongs to the KAE1 / TsaD family. The cofactor is Fe(2+).

It localises to the cytoplasm. The enzyme catalyses L-threonylcarbamoyladenylate + adenosine(37) in tRNA = N(6)-L-threonylcarbamoyladenosine(37) in tRNA + AMP + H(+). Its function is as follows. Required for the formation of a threonylcarbamoyl group on adenosine at position 37 (t(6)A37) in tRNAs that read codons beginning with adenine. Is involved in the transfer of the threonylcarbamoyl moiety of threonylcarbamoyl-AMP (TC-AMP) to the N6 group of A37, together with TsaE and TsaB. TsaD likely plays a direct catalytic role in this reaction. The sequence is that of tRNA N6-adenosine threonylcarbamoyltransferase from Streptococcus pneumoniae serotype 19F (strain G54).